We begin with the raw amino-acid sequence, 352 residues long: MKHDWWLSAARPLDQTACALAAERQRRLTKPRGSLGRLERLAIHLAALQGRERPVVERPWIAIFAGDHGVAEEGVSPYPQAVTGQMLRNFATGGAAISVLARQLGAELELIDLGTAEPLEPPPAGVRRRHLGPGTANFLRGPAMSVRQGLDALAAGRDSVRRAQAAGAHLYIGGEMGIANTSSASALASALLEQPAAALVGPGTGLDAAGLARKVAVVERALALHGAHAGEPLEILRRLGGFEIAALAGAYLACAQEGLPALVDGFICSVAALLAVRLNPACRDWLLFAHRGAEPGHRRVLEALAAEPLLDLGLRLGEGSGAALAVPLLQSACRLHGEMATFAEAAVADAGR.

Glu318 serves as the catalytic Proton acceptor.

It belongs to the CobT family.

It carries out the reaction 5,6-dimethylbenzimidazole + nicotinate beta-D-ribonucleotide = alpha-ribazole 5'-phosphate + nicotinate + H(+). Its pathway is nucleoside biosynthesis; alpha-ribazole biosynthesis; alpha-ribazole from 5,6-dimethylbenzimidazole: step 1/2. Functionally, catalyzes the synthesis of alpha-ribazole-5'-phosphate from nicotinate mononucleotide (NAMN) and 5,6-dimethylbenzimidazole (DMB). The protein is Nicotinate-nucleotide--dimethylbenzimidazole phosphoribosyltransferase of Azotobacter vinelandii (strain DJ / ATCC BAA-1303).